The primary structure comprises 876 residues: DDB1- and CUL4-associated factor 6 (876 aa).

5 WD repeats span residues 49–88 (VHDGCVNTICWNDTGEYILSGSDDTKLVISNPYSRKVLTT), 92–133 (GHRA…ETNR), 139–179 (CHYG…SCTK), 189–229 (NCRR…TRAT), and 251–290 (NKSCRVTSLCYSEDGQEILVSYSSDYIYLFDPKDDTAREL). Composition is skewed to basic and acidic residues over residues 288–303 (RELKTPSAEERREELR) and 312–334 (LRGDWSDTGPRARPESERERDGE). Disordered stretches follow at residues 288–340 (RELK…PNVS), 355–391 (EASEVAQSNRGRGRPRPRGGTNQPDVSTLPTVPSSPN), 408–485 (LQPS…TEGT), 498–645 (WSST…NPEL), and 658–691 (EDPSARDSALQDTDDSDDDPVLIPGARYRTGPGD). Position 336 is a phosphoserine (serine 336). 2 stretches are compositionally biased toward polar residues: residues 375-391 (TNQPDVSTLPTVPSSPN) and 409-422 (QPSTSSTDPVQAQA). Positions 456–466 (HQSDNSNERLS) are enriched in basic and acidic residues. Residues 499–510 (SSTASSSRGNGS) show a composition bias toward low complexity. Residues 534-544 (SETRAPEELSE) are compositionally biased toward basic and acidic residues. Polar residues-rich tracts occupy residues 550–562 (ENLTQNQIDTAQL), 571–584 (DSNSGEKNNPSQDS), 603–613 (EQASTESATRH), and 621–645 (PSQTEAIEQASTESATRHTSANPEL). A Phosphoserine modification is found at serine 665. The residue at position 670 (threonine 670) is a Phosphothreonine. Position 673 is a phosphoserine (serine 673). Residues 692–721 (RRSAVARIQEFFRRRKERKEMEELDTLNIR) form the IQ domain. WD repeat units follow at residues 734–772 (NSRTMIKEANFWGANFVMSGSDCGHIFIWDRHTAEHLML) and 775–814 (ADNHVVNCLQPHPFDPILASSGIDYDIKIWSPLEESRIFN). A phosphoserine mark is found at serine 863 and serine 866.

In terms of assembly, interacts with the nuclear receptors NR3C1 and AR in the presence of ligand. Interacts with DDB1, CUL4A and CUL4B.

Its subcellular location is the nucleus. Its pathway is protein modification; protein ubiquitination. In terms of biological role, ligand-dependent coactivator of nuclear receptors. Enhance transcriptional activity of the nuclear receptors NR3C1 and AR. May function as a substrate receptor for CUL4-DDB1 E3 ubiquitin-protein ligase complex. This Mus musculus (Mouse) protein is DDB1- and CUL4-associated factor 6 (Dcaf6).